Reading from the N-terminus, the 179-residue chain is Large ribosomal subunit protein uL5 (179 aa).

The protein belongs to the universal ribosomal protein uL5 family. In terms of assembly, part of the 50S ribosomal subunit; part of the 5S rRNA/L5/L18/L25 subcomplex. Contacts the 5S rRNA and the P site tRNA. Forms a bridge to the 30S subunit in the 70S ribosome.

Functionally, this is one of the proteins that bind and probably mediate the attachment of the 5S RNA into the large ribosomal subunit, where it forms part of the central protuberance. In the 70S ribosome it contacts protein S13 of the 30S subunit (bridge B1b), connecting the 2 subunits; this bridge is implicated in subunit movement. Contacts the P site tRNA; the 5S rRNA and some of its associated proteins might help stabilize positioning of ribosome-bound tRNAs. In Thiobacillus denitrificans (strain ATCC 25259 / T1), this protein is Large ribosomal subunit protein uL5.